A 75-amino-acid chain; its full sequence is MKLTLFILIVFVVLANVYAAGISERNIIGGRVIKLCGGGAQKCCDREPRCDPCRKCVQSFHSGVYMCSDKKSNCS.

Residues 1–19 (MKLTLFILIVFVVLANVYA) form the signal peptide. Positions 20-31 (AGISERNIIGGR) are excised as a propeptide.

In terms of processing, contains 4 disulfide bonds. As to expression, expressed by the venom gland.

The protein localises to the secreted. Functionally, no toxicity is observed upon intracranial injection into mice and intrathorax injection into crickets. The polypeptide is U14-hexatoxin-Mg1a (Macrothele gigas (Japanese funnel web spider)).